The following is a 222-amino-acid chain: Superoxide dismutase [Cu-Zn], chloroplastic (222 aa).

Residues methionine 1 to alanine 68 constitute a chloroplast transit peptide. Cu cation is bound by residues histidine 114, histidine 116, and histidine 131. The cysteines at positions 125 and 214 are disulfide-linked. Histidine 131, histidine 139, histidine 148, and aspartate 151 together coordinate Zn(2+). Histidine 188 is a Cu cation binding site.

It belongs to the Cu-Zn superoxide dismutase family. In terms of assembly, homotetramer. Cu cation is required as a cofactor. Requires Zn(2+) as cofactor.

It localises to the plastid. It is found in the chloroplast. It catalyses the reaction 2 superoxide + 2 H(+) = H2O2 + O2. Functionally, destroys radicals which are normally produced within the cells and which are toxic to biological systems. In Spinacia oleracea (Spinach), this protein is Superoxide dismutase [Cu-Zn], chloroplastic (SODCP).